Here is a 733-residue protein sequence, read N- to C-terminus: Zinc finger protein indra (733 aa).

Residues 17-91 form the ZAD domain; it reads VRCDHCGTSQ…RETVDRVQEQ (75 aa). The Zn(2+) site is built by Cys19, Cys22, Cys64, and Cys67. The span at 90-100 shows a compositional bias: basic and acidic residues; it reads EQPAKKTKVAE. Positions 90-121 are disordered; sequence EQPAKKTKVAEIEEPSTQESDKKAVKVPKKNT. Phosphoserine occurs at positions 109, 153, and 176. Thr180 and Thr188 each carry phosphothreonine. C2H2-type zinc fingers lie at residues 228–251 and 259–282; these read FQCPECEFHAKFPKPYKEHLQKEH and YPCTLCIKTFGVLKTLKNHLRDTH. The segment covering 285-316 has biased composition (basic and acidic residues); it reads TFESEAKTKAKESKEKEAKSGAKNKIDAKAKE. A disordered region spans residues 285–336; the sequence is TFESEAKTKAKESKEKEAKSGAKNKIDAKAKETNAVSQRKKPKEKKSKEKKT. C2H2-type zinc fingers lie at residues 416–439 and 447–469; these read FQCEICDCELMTAKQMQEHMKTVH and FKCHVCEKSLATKQSLKTHMTLH. 2 disordered regions span residues 499–525 and 540–622; these read IENTAEKVEGPKKSQQSPTKAAKFTNR and AFKT…SSDV. Residues 592 to 602 are compositionally biased toward polar residues; it reads SVSTTNGNSPA. 3 positions are modified to phosphoserine: Ser600, Ser642, and Ser646. Position 647 is a phosphothreonine (Thr647). 2 consecutive C2H2-type zinc fingers follow at residues 653 to 676 and 708 to 733; these read LSCDRCGKFVKSRQRLDSHMEKKH and LPCGVANCKKVFTEANFLSSHLRKRH. The residue at position 654 (Ser654) is a Phosphoserine.

Belongs to the krueppel C2H2-type zinc-finger protein family.

The protein resides in the nucleus. Its subcellular location is the nucleolus. Required for rDNA copy number maintenance and non-random sister chromatid segregation (NRSS) following unequal sister chromatid exchange. Binds ribosomal DNA (rDNA) preferentially binding to intergenic spacers (IGS) regions on both X and Y chromosomes. Essential for NRSS, a mechanism which contributes to the recovery and maintenance of inherently unstable rDNA copy numbers so that the integrity of the germline genome is upheld over generations and germline immortality is sustained. May be involved in transcriptional regulation. The chain is Zinc finger protein indra from Drosophila melanogaster (Fruit fly).